The following is a 198-amino-acid chain: KinB-signaling pathway activation protein (198 aa).

Transmembrane regions (helical) follow at residues 9–29 (FFFSILAVGALITSIVGFALK), 42–62 (AGQIFSVLFWFIGVGMIFSVI), 90–110 (LQLFFILFVAFDLMYVRFLFF), 117–137 (LAGYAWLPVFLLIFGVITAYI), 146–166 (TFVSSLFLMVVITALEWFPAL), and 173–193 (WLYLMLFPLMACNAFQLLMLP).

It localises to the cell membrane. Involved in the activation of the KinB signaling pathway of sporulation. The polypeptide is KinB-signaling pathway activation protein (kbaA) (Bacillus subtilis (strain 168)).